The primary structure comprises 1439 residues: Mediator of RNA polymerase II transcription subunit 23 (1439 aa).

Residues 282–318 (SQMLNLQKHQKQRYNALEEQLVNLIVQAMEMTEANDA) adopt a coiled-coil conformation. Residues 358–625 (HIVLALHEKL…HHVPTHYRVQ (268 aa)) form an interaction with Hsf region. Disordered regions lie at residues 1338 to 1372 (NDNT…QQQQ) and 1401 to 1439 (SVPL…MRHN). Composition is skewed to low complexity over residues 1348–1372 (SQTQ…QQQQ) and 1411–1439 (QQQQ…MRHN).

Belongs to the Mediator complex subunit 23 family. Component of the Mediator complex. Interacts with Hsf.

It is found in the nucleus. Its function is as follows. Component of the Mediator complex, a coactivator involved in the regulated transcription of nearly all RNA polymerase II-dependent genes. Mediator functions as a bridge to convey information from gene-specific regulatory proteins to the basal RNA polymerase II transcription machinery. Mediator is recruited to promoters by direct interactions with regulatory proteins and serves as a scaffold for the assembly of a functional preinitiation complex with RNA polymerase II and the general transcription factors. Required for transcriptional activation in response to heat shock. The chain is Mediator of RNA polymerase II transcription subunit 23 (MED23) from Drosophila melanogaster (Fruit fly).